An 845-amino-acid chain; its full sequence is AdoMet-dependent rRNA methyltransferase SPB1 (845 aa).

S-adenosyl-L-methionine-binding residues include Gly58, Trp60, Asp78, Asp94, and Asp119. The active-site Proton acceptor is Lys159. Disordered stretches follow at residues 223-247 and 279-298; these read GGGN…SQRQ and SLNK…DDDH. Coiled coils occupy residues 366–402 and 464–502; these read TEEQ…KEII and DEEE…ERDA. Residues 496-512 show a composition bias toward basic and acidic residues; sequence RKAERDANYRAKQARGD. Disordered stretches follow at residues 496-546, 587-660, and 788-821; these read RKAE…DDDE, ENKT…HQQK, and KLNK…VKGK. Acidic residues-rich tracts occupy residues 513–528, 536–545, 610–624, and 633–648; these read ADDE…NDDV, MESESDDDDD, NEND…ESDF, and DDDD…DDEV. Positions 739–796 form a coiled coil; it reads IKKVLEAQSRKKLRALKRLEKIKKKSDLINEDSGKSERDKADEISKLMKKLNKKQKQK. The segment covering 788–797 has biased composition (basic residues); it reads KLNKKQKQKP.

It belongs to the class I-like SAM-binding methyltransferase superfamily. RNA methyltransferase RlmE family. SPB1 subfamily. As to quaternary structure, component of the nucleolar and nucleoplasmic pre-60S ribosomal particle.

It is found in the nucleus. It localises to the nucleolus. It catalyses the reaction a ribonucleotide in rRNA + S-adenosyl-L-methionine = a 2'-O-methylribonucleotide in rRNA + S-adenosyl-L-homocysteine + H(+). Functionally, required for proper assembly of pre-ribosomal particles during the biogenesis of the 60S ribosomal subunit. In Candida albicans (strain SC5314 / ATCC MYA-2876) (Yeast), this protein is AdoMet-dependent rRNA methyltransferase SPB1.